Here is a 284-residue protein sequence, read N- to C-terminus: Large ribosomal subunit protein uL2 (284 aa).

Disordered stretches follow at residues 28–50 and 232–284; these read ELEG…FKKS and RGTA…DRRK. Residues 36-46 are compositionally biased toward basic residues; that stretch reads RSVRPNKKLSF. The span at 240 to 250 shows a compositional bias: basic and acidic residues; the sequence is DHPHGGGEGRH. Residues 264-284 are compositionally biased toward basic residues; sequence KGLKTRDKRKSNKWIVKDRRK.

This sequence belongs to the universal ribosomal protein uL2 family. In terms of assembly, part of the 50S ribosomal subunit. Forms a bridge to the 30S subunit in the 70S ribosome.

One of the primary rRNA binding proteins. Required for association of the 30S and 50S subunits to form the 70S ribosome, for tRNA binding and peptide bond formation. It has been suggested to have peptidyltransferase activity; this is somewhat controversial. Makes several contacts with the 16S rRNA in the 70S ribosome. The sequence is that of Large ribosomal subunit protein uL2 from Chlamydia muridarum (strain MoPn / Nigg).